The chain runs to 277 residues: 3-methyl-2-oxobutanoate hydroxymethyltransferase (277 aa).

Positions 43 and 82 each coordinate Mg(2+). 3-methyl-2-oxobutanoate-binding positions include 43-44 (DS), Asp-82, and Lys-112. Glu-114 lines the Mg(2+) pocket. The active-site Proton acceptor is the Glu-181.

Belongs to the PanB family. In terms of assembly, homodecamer; pentamer of dimers. It depends on Mg(2+) as a cofactor.

Its subcellular location is the cytoplasm. The enzyme catalyses 3-methyl-2-oxobutanoate + (6R)-5,10-methylene-5,6,7,8-tetrahydrofolate + H2O = 2-dehydropantoate + (6S)-5,6,7,8-tetrahydrofolate. It participates in cofactor biosynthesis; (R)-pantothenate biosynthesis; (R)-pantoate from 3-methyl-2-oxobutanoate: step 1/2. In terms of biological role, catalyzes the reversible reaction in which hydroxymethyl group from 5,10-methylenetetrahydrofolate is transferred onto alpha-ketoisovalerate to form ketopantoate. This is 3-methyl-2-oxobutanoate hydroxymethyltransferase from Bacillus velezensis (strain DSM 23117 / BGSC 10A6 / LMG 26770 / FZB42) (Bacillus amyloliquefaciens subsp. plantarum).